The chain runs to 227 residues: Small heat shock protein hspG3 (227 aa).

Residues 31 to 227 (NKRVDIIPSM…SSNTIKININ (197 aa)) enclose the sHSP domain. The disordered stretch occupies residues 119–164 (QQQQLENSNKENDEPSIEEFEEDVKSKSELNKTTLNTTENKDEDKT).

The protein belongs to the small heat shock protein (HSP20) family.

In Dictyostelium discoideum (Social amoeba), this protein is Small heat shock protein hspG3 (hspG3).